A 273-amino-acid polypeptide reads, in one-letter code: SUMO-1 cysteine protease S273R (273 aa).

Active-site residues include His168 and Asn187. Residue Gln226 participates in substrate binding. The active-site Nucleophile is Cys232.

The protein belongs to the peptidase C63 family.

It is found in the host cytoplasm. Its subcellular location is the virion. Its function is as follows. Cysteine protease that plays several role during infection including processing of the structural polyprotein or inhibition of the host immune response. Catalyzes the maturation of the pp220 and pp62 polyprotein precursors into core-shell proteins. Plays a role in the disruption of host pyroptosis via specific cleavage of gasdermin D/GSDMD. In addition, strongly decreases the host cGAS-STING signaling by targeting IKBKE via its enzymatic activity. Also impairs host FOXJ1-mediated antiviral effect via degradation of FOXJ1. This is SUMO-1 cysteine protease S273R from Ornithodoros (relapsing fever ticks).